The sequence spans 284 residues: MQSNATEHAALERVAPRGTALRIAHAVKRYGEREVLYGIDLEIAPGEFVAIVGRSGCGKSTLLRLIAGLEGIDGGSLHRDGAAGGGLHDDARVMFQDARLLPWKRVLDNVALGLPRTHRAQAAEVLAQVGLAERAGEWPARLSGGQRQRVALARALVHRPRLLLLDEPLGALDALTRIDMQNLIEGLWQRLGFTAVLVTHDVAEAVALADRVVLIEDGRIALDARIDLPRPRHRGAPAFARLEEAILNRVMQRKADPDEVTDARAHVARPSPWEVSAAAVGWAV.

Positions 21–242 (LRIAHAVKRY…HRGAPAFARL (222 aa)) constitute an ABC transporter domain. Residue 53 to 60 (GRSGCGKS) coordinates ATP.

The protein belongs to the ABC transporter superfamily. Aliphatic sulfonates importer (TC 3.A.1.17.2) family. As to quaternary structure, the complex is composed of two ATP-binding proteins (SsuB), two transmembrane proteins (SsuC) and a solute-binding protein (SsuA).

Its subcellular location is the cell inner membrane. It catalyses the reaction ATP + H2O + aliphatic sulfonate-[sulfonate-binding protein]Side 1 = ADP + phosphate + aliphatic sulfonateSide 2 + [sulfonate-binding protein]Side 1.. Functionally, part of the ABC transporter complex SsuABC involved in aliphatic sulfonates import. Responsible for energy coupling to the transport system. This Ralstonia nicotianae (strain ATCC BAA-1114 / GMI1000) (Ralstonia solanacearum) protein is Aliphatic sulfonates import ATP-binding protein SsuB.